Reading from the N-terminus, the 630-residue chain is Conserved oligomeric Golgi complex subunit 6 (630 aa).

The protein belongs to the COG6 family. In terms of assembly, component of the conserved oligomeric Golgi complex which is composed of eight different subunits and is required for normal Golgi morphology and localization.

The protein resides in the golgi apparatus membrane. Required for normal Golgi function. The protein is Conserved oligomeric Golgi complex subunit 6 of Drosophila melanogaster (Fruit fly).